The chain runs to 202 residues: Outer-membrane lipoprotein carrier protein (202 aa).

Positions methionine 1 to serine 18 are cleaved as a signal peptide.

This sequence belongs to the LolA family. As to quaternary structure, monomer.

The protein resides in the periplasm. In terms of biological role, participates in the translocation of lipoproteins from the inner membrane to the outer membrane. Only forms a complex with a lipoprotein if the residue after the N-terminal Cys is not an aspartate (The Asp acts as a targeting signal to indicate that the lipoprotein should stay in the inner membrane). The protein is Outer-membrane lipoprotein carrier protein of Legionella pneumophila (strain Lens).